The primary structure comprises 2529 residues: Zinc finger FYVE domain-containing protein 26 (2529 aa).

3 disordered regions span residues 584-650 (HLPE…PGPH), 689-709 (SSHRTPEETKLPEDQSCSAAR), and 733-810 (VTSN…RFQT). Ser605 and Ser609 each carry phosphoserine. The span at 689–701 (SSHRTPEETKLPE) shows a compositional bias: basic and acidic residues. Residues 755–765 (SSLRRGRRTRR) show a composition bias toward basic residues. Positions 778-796 (SLEGTSSELSTSTSEGSLS) are enriched in low complexity. Residue Ser791 is modified to Phosphoserine. Over residues 797-810 (AVSGQVESDSRFQT) the composition is skewed to polar residues. Residues 859 to 884 (MFVERYQEVIQELARVEHKIENQNSD) are a coiled coil. The segment at 1258–1286 (GLPLSTLGSPRPSENPSAERKSHSSPKDS) is disordered. Polar residues predominate over residues 1263–1273 (TLGSPRPSENP). The span at 1274–1283 (SAERKSHSSP) shows a compositional bias: basic and acidic residues. Positions 1488-1515 (VSDMAVQEELKSELQRKLMELRVYQKIL) form a coiled coil. 4 positions are modified to phosphoserine: Ser1732, Ser1754, Ser1770, and Ser1772. The disordered stretch occupies residues 1762-1799 (APGSALVRSPSPKERAFPQTQPPVEFVPPETPPARDQW). An FYVE-type zinc finger spans residues 1802–1862 (DETESVCMVC…VCDQCYSYYN (61 aa)). Residues Cys1808, Cys1811, Cys1825, Cys1828, Cys1833, Cys1836, Cys1854, and Cys1857 each contribute to the Zn(2+) site. Positions 1865–1884 (TPEESPCQSEVPDSAKNESP) are disordered.

Belongs to the ZFYVE26 family. Interacts with AP5Z1, AP5B1, AP5S1 and SPG11. Interacts with TTC19 and KIF13A.

Its subcellular location is the cytoplasm. It is found in the cytoskeleton. The protein resides in the microtubule organizing center. It localises to the centrosome. The protein localises to the midbody. Phosphatidylinositol 3-phosphate-binding protein required for the abscission step in cytokinesis: recruited to the midbody during cytokinesis and acts as a regulator of abscission. May also be required for efficient homologous recombination DNA double-strand break repair. In Mus musculus (Mouse), this protein is Zinc finger FYVE domain-containing protein 26 (Zfyve26).